A 153-amino-acid polypeptide reads, in one-letter code: Ribosome maturation factor RimP (153 aa).

This sequence belongs to the RimP family.

Its subcellular location is the cytoplasm. In terms of biological role, required for maturation of 30S ribosomal subunits. This chain is Ribosome maturation factor RimP, found in Coxiella burnetii (strain Dugway 5J108-111).